A 437-amino-acid chain; its full sequence is Serine carboxypeptidase-like 17 (437 aa).

The N-terminal stretch at 1-26 is a signal peptide; sequence MGKECYYLSWILKFHLLLVLIQLVDS. 3 disulfide bridges follow: Cys85/Cys327, Cys249/Cys263, and Cys287/Cys293. The N-linked (GlcNAc...) asparagine glycan is linked to Asn106. Ser181 is a catalytic residue. Asp362 is an active-site residue. Asn378 carries an N-linked (GlcNAc...) asparagine glycan. Residue His415 is part of the active site.

It belongs to the peptidase S10 family. In terms of tissue distribution, expressed in seedlings and siliques.

It localises to the secreted. In terms of biological role, probable carboxypeptidase. This chain is Serine carboxypeptidase-like 17 (SCPL17), found in Arabidopsis thaliana (Mouse-ear cress).